Here is a 237-residue protein sequence, read N- to C-terminus: Lysophospholipase-like protein 1 (237 aa).

Ala2 bears the N-acetylalanine mark. Residues Ser124, Asp179, and His211 each act as charge relay system in the active site.

The protein belongs to the AB hydrolase superfamily. AB hydrolase 2 family.

It localises to the cytoplasm. Its subcellular location is the cytosol. It carries out the reaction S-hexadecanoyl-L-cysteinyl-[protein] + H2O = L-cysteinyl-[protein] + hexadecanoate + H(+). Its function is as follows. Palmitoyl thioesterase that catalyzes depalmitoylation of CGAS and KCNMA1. Acts as a regulator of innate immunity by mediating depalmitoylation of CGAS, thereby preventing CGAS homodimerization and cyclic GMP-AMP synthase activity. Does not exhibit phospholipase nor triacylglycerol lipase activity, able to hydrolyze only short chain substrates due to its shallow active site. The chain is Lysophospholipase-like protein 1 from Pongo abelii (Sumatran orangutan).